The primary structure comprises 129 residues: Serum amyloid A-1 protein (129 aa).

Positions 1-18 (MKLFTGLIFCSLVLGVSS) are cleaved as a signal peptide. Residues 19 to 44 (QWYSFIGEAAQGAWDMYRAYSDMIEA) form an important for amyloid formation region. The segment at 92 to 129 (GDSGHGVEDSKADQAANEWGRSGKDPNHFRPPGLPDKY) is disordered.

It belongs to the SAA family. As to quaternary structure, homohexamer; dimer of trimers. Can form amyloid fibrils after partial proteolysis; the native, undenatured protein does not form amyloid fibrils (in vitro). Apolipoprotein of the HDL complex. Binds to heparin. Detected in liver.

Its subcellular location is the secreted. Its function is as follows. Major acute phase protein. The chain is Serum amyloid A-1 protein (SAA1) from Neovison vison (American mink).